Consider the following 237-residue polypeptide: Proteasome subunit alpha (237 aa).

The protein belongs to the peptidase T1A family. As to quaternary structure, the 20S proteasome core is composed of 14 alpha and 14 beta subunits that assemble into four stacked heptameric rings, resulting in a barrel-shaped structure. The two inner rings, each composed of seven catalytic beta subunits, are sandwiched by two outer rings, each composed of seven alpha subunits. The catalytic chamber with the active sites is on the inside of the barrel. Has a gated structure, the ends of the cylinder being occluded by the N-termini of the alpha-subunits. Is capped by the proteasome-associated ATPase, ARC.

It localises to the cytoplasm. It functions in the pathway protein degradation; proteasomal Pup-dependent pathway. With respect to regulation, the formation of the proteasomal ATPase ARC-20S proteasome complex, likely via the docking of the C-termini of ARC into the intersubunit pockets in the alpha-rings, may trigger opening of the gate for substrate entry. Interconversion between the open-gate and close-gate conformations leads to a dynamic regulation of the 20S proteasome proteolysis activity. Functionally, component of the proteasome core, a large protease complex with broad specificity involved in protein degradation. This Kineococcus radiotolerans (strain ATCC BAA-149 / DSM 14245 / SRS30216) protein is Proteasome subunit alpha.